A 186-amino-acid polypeptide reads, in one-letter code: Ribosome maturation factor RimM (186 aa).

One can recognise a PRC barrel domain in the interval 93–168 (EDDFYLVDLI…VLIDPPQEEN (76 aa)). Positions 163–186 (PPQEENAPEFGRNELGHDDGGEAA) are disordered. The span at 173 to 186 (GRNELGHDDGGEAA) shows a compositional bias: basic and acidic residues.

Belongs to the RimM family. In terms of assembly, binds ribosomal protein uS19.

The protein localises to the cytoplasm. In terms of biological role, an accessory protein needed during the final step in the assembly of 30S ribosomal subunit, possibly for assembly of the head region. Essential for efficient processing of 16S rRNA. May be needed both before and after RbfA during the maturation of 16S rRNA. It has affinity for free ribosomal 30S subunits but not for 70S ribosomes. The polypeptide is Ribosome maturation factor RimM (Granulibacter bethesdensis (strain ATCC BAA-1260 / CGDNIH1)).